A 279-amino-acid chain; its full sequence is Diaminopimelate epimerase (279 aa).

Asparagine 13 and asparagine 66 together coordinate substrate. Catalysis depends on cysteine 75, which acts as the Proton donor. Substrate-binding positions include glycine 76–asparagine 77, asparagine 164, asparagine 197, and glutamate 215–arginine 216. The active-site Proton acceptor is the cysteine 224. Glycine 225–threonine 226 lines the substrate pocket.

It belongs to the diaminopimelate epimerase family. As to quaternary structure, homodimer.

It is found in the cytoplasm. It catalyses the reaction (2S,6S)-2,6-diaminopimelate = meso-2,6-diaminopimelate. It functions in the pathway amino-acid biosynthesis; L-lysine biosynthesis via DAP pathway; DL-2,6-diaminopimelate from LL-2,6-diaminopimelate: step 1/1. Its function is as follows. Catalyzes the stereoinversion of LL-2,6-diaminopimelate (L,L-DAP) to meso-diaminopimelate (meso-DAP), a precursor of L-lysine and an essential component of the bacterial peptidoglycan. The protein is Diaminopimelate epimerase of Brachyspira hyodysenteriae (strain ATCC 49526 / WA1).